We begin with the raw amino-acid sequence, 422 residues long: CinA-like protein (422 aa).

The protein belongs to the CinA family.

The polypeptide is CinA-like protein (Mycolicibacterium gilvum (strain PYR-GCK) (Mycobacterium gilvum (strain PYR-GCK))).